The sequence spans 619 residues: Glucokinase regulatory protein (619 aa).

SIS domains follow at residues 90 to 283 (VQEV…AESN) and 319 to 498 (TATS…LRGK). Residue 107–109 (CGT) participates in keto-D-fructose 6-phosphate binding. Beta-D-fructose 1-phosphate contacts are provided by residues 109–110 (TS), Glu-153, 179–181 (SCG), and Glu-347. Keto-D-fructose 6-phosphate is bound by residues 179–183 (SCGLS) and Glu-347. An essential for interaction with GCK region spans residues 462–464 (ILF). Lys-513 is a keto-D-fructose 6-phosphate binding site. Lys-513 is a binding site for beta-D-fructose 1-phosphate.

The protein belongs to the GCKR family. Interacts (fructose 6-phosphate bound form) with gck.

It localises to the nucleus. Its subcellular location is the cytoplasm. The protein resides in the mitochondrion. Regulates glucokinase (gck) by forming an inactive complex with this enzyme. The affinity of gckr for gck is modulated by fructose metabolites: gckr with bound fructose 6-phosphate has increased affinity for gck, while gckr with bound fructose 1-phosphate has strongly decreased affinity for gck and does not inhibit gck activity. The sequence is that of Glucokinase regulatory protein from Xenopus laevis (African clawed frog).